We begin with the raw amino-acid sequence, 466 residues long: Ribulose bisphosphate carboxylase large chain (466 aa).

Position 5 is an N6,N6,N6-trimethyllysine (K5). Residues N114 and T164 each coordinate substrate. The active-site Proton acceptor is K166. Position 168 (K168) interacts with substrate. K192, D194, and E195 together coordinate Mg(2+). K192 is modified (N6-carboxylysine). H285 acts as the Proton acceptor in catalysis. Substrate contacts are provided by R286, H318, and S370.

It belongs to the RuBisCO large chain family. Type I subfamily. Heterohexadecamer of 8 large chains and 8 small chains. The cofactor is Mg(2+).

The protein resides in the plastid. The protein localises to the chloroplast. The enzyme catalyses 2 (2R)-3-phosphoglycerate + 2 H(+) = D-ribulose 1,5-bisphosphate + CO2 + H2O. It catalyses the reaction D-ribulose 1,5-bisphosphate + O2 = 2-phosphoglycolate + (2R)-3-phosphoglycerate + 2 H(+). In terms of biological role, ruBisCO catalyzes two reactions: the carboxylation of D-ribulose 1,5-bisphosphate, the primary event in carbon dioxide fixation, as well as the oxidative fragmentation of the pentose substrate in the photorespiration process. Both reactions occur simultaneously and in competition at the same active site. This chain is Ribulose bisphosphate carboxylase large chain, found in Lobelia sp.